A 403-amino-acid chain; its full sequence is Double C2-like domain-containing protein alpha (403 aa).

The interval 1-92 is interaction with UNC13D and DYNLT1; that stretch reads MRGRRGDRMT…DSYDSDDTTA (92 aa). 2 C2 domains span residues 92–214 and 254–387; these read ALGT…HFNI and ERGR…ERWH. 9 residues coordinate Ca(2+): Asp-123, Asp-129, Asp-184, Asp-186, Asp-285, Asp-291, Asp-345, Asp-347, and Asp-353. The segment at 218–403 is interaction with UNC13D; sequence RQVPLPSPSS…PPAAGALPLA (186 aa).

In terms of assembly, interacts (via N-terminus) with UNC13A. Interacts with cytoplasmic dynein light chain DYNLT1. Interacts with UNC13D. Ca(2+) is required as a cofactor. Predominantly expressed in brain. Also found in non-neural tissues. Expressed in RBL-2H3 mast cell line.

It is found in the cytoplasmic vesicle. The protein localises to the secretory vesicle. Its subcellular location is the synaptic vesicle membrane. It localises to the synapse. The protein resides in the synaptosome. It is found in the lysosome. In terms of biological role, calcium sensor which most probably regulates fusion of vesicles with membranes. Binds calcium and phospholipids. May be involved in calcium dependent neurotransmitter release through the interaction with UNC13A. May be involved in calcium-dependent spontaneous release of neurotransmitter in absence of action potentials in neuronal cells. Regulates Ca(2+)-dependent secretory lysosome exocytosis in mast cells. This chain is Double C2-like domain-containing protein alpha (Doc2a), found in Rattus norvegicus (Rat).